The sequence spans 1036 residues: ADAMTS-like protein 4 (1036 aa).

Residues Met-1–Asp-24 form the signal peptide. One can recognise a TSP type-1 1 domain in the interval Gly-47–Pro-91. Disordered regions lie at residues His-73–Gly-149 and His-163–Leu-308. Positions His-163–Gly-173 are enriched in basic residues. A compositionally biased stretch (polar residues) spans Thr-215–Gly-253. N-linked (GlcNAc...) asparagine glycosylation is found at Asn-454 and Asn-737. 5 TSP type-1 domains span residues Cys-687–Gly-748, Trp-750–Pro-804, Cys-805–Glu-871, Arg-872–Ala-931, and Cys-932–Asn-988. Residues Pro-991–Leu-1028 enclose the PLAC domain.

As to quaternary structure, interacts with CTSB. Interacts with FBN1. Post-translationally, glycosylated. Can be O-fucosylated by POFUT2 on a serine or a threonine residue found within the consensus sequence C1-X(2)-(S/T)-C2-G of the TSP type-1 repeat domains where C1 and C2 are the first and second cysteine residue of the repeat, respectively. Fucosylated repeats can then be further glycosylated by the addition of a beta-1,3-glucose residue by the glucosyltransferase, B3GALTL. Fucosylation mediates the efficient secretion of ADAMTS family members. Can also be C-glycosylated with one or two mannose molecules on tryptophan residues within the consensus sequence W-X-X-W of the TPRs, and N-glycosylated. These other glycosylations can also facilitate secretion. In terms of tissue distribution, widely expressed in a range of tissues. Especially prevalent in brain, spinal cord, muscle, lung and heart.

The protein localises to the secreted. It is found in the extracellular space. The protein resides in the extracellular matrix. Positive regulation of apoptosis. May facilitate FBN1 microfibril biogenesis. This is ADAMTS-like protein 4 from Mus musculus (Mouse).